The sequence spans 106 residues: uncharacterized protein (106 aa).

The protein localises to the mitochondrion. This is an uncharacterized protein from Arabidopsis thaliana (Mouse-ear cress).